The chain runs to 443 residues: FLYWCH-type zinc finger-containing protein peb-1 (443 aa).

The segment at 22–49 is disordered; that stretch reads KPGSSDISSSSTDTSAISPISVSSMPLS. Over residues 25–42 the composition is skewed to low complexity; that stretch reads SSDISSSSTDTSAISPIS. The required for DNA-binding DNA-binding region spans 46–203; sequence MPLSPDKEKK…RNKDGKPKKP (158 aa). The segment at 69-135 adopts an FLYWCH-type zinc-finger fold; it reads IVTSFKGYQK…NACTKGSHNH (67 aa). The tract at residues 251–271 is disordered; that stretch reads PTIQIPQPIPTPIQHQQQEQS.

Its subcellular location is the nucleus. Putative transcription factor. Binds to specific sequence motif 5'-[TC][AGT]TGCC[GA][AT]-3' in regulatory elements of target genes such as myosin myo-2. May modulate gene expression, perhaps acting in opposition to transcription factor pha-4. Involved in morphogenesis, perhaps especially in formation of the pharynx. Plays roles in molting, feeding and morphology. The protein is FLYWCH-type zinc finger-containing protein peb-1 of Caenorhabditis elegans.